A 253-amino-acid polypeptide reads, in one-letter code: Major prion protein (253 aa).

A signal peptide spans 1–22 (MANLGCWMLVLFVATWSDLGLC). An interaction with GRB2, ERI3 and SYN1 region spans residues 23 to 230 (KKRPKPGGWN…ESQAYYQRGS (208 aa)). The disordered stretch occupies residues 26–108 (PKPGGWNTGG…WHKPSKPKTS (83 aa)). A run of 5 repeats spans residues 51 to 59 (PQGGGGWGQ), 60 to 67 (PHGGGWGQ), 68 to 75 (PHGGGWGQ), 76 to 83 (PHGGGWGQ), and 84 to 91 (PHGGGWGQ). The segment at 51–91 (PQGGGGWGQPHGGGWGQPHGGGWGQPHGGGWGQPHGGGWGQ) is 5 X 8 AA tandem repeats of P-H-G-G-G-W-G-Q. A compositionally biased stretch (gly residues) spans 52–95 (QGGGGWGQPHGGGWGQPHGGGWGQPHGGGWGQPHGGGWGQGGGT). Cu(2+) contacts are provided by His-61, Gly-62, Gly-63, His-69, Gly-70, Gly-71, His-77, Gly-78, Gly-79, His-85, Gly-86, and Gly-87. Basic residues predominate over residues 98-108 (QWHKPSKPKTS). Cys-179 and Cys-214 are disulfide-bonded. Asn-181 and Asn-197 each carry an N-linked (GlcNAc...) asparagine glycan. Ser-230 carries GPI-anchor amidated serine lipidation. Residues 231–253 (SMVLFSSPPVILLISFLIFLIVG) constitute a propeptide, removed in mature form.

It belongs to the prion family. In terms of assembly, monomer and homodimer. Has a tendency to aggregate into amyloid fibrils containing a cross-beta spine, formed by a steric zipper of superposed beta-strands. Soluble oligomers may represent an intermediate stage on the path to fibril formation. Copper binding may promote oligomerization. Interacts with GRB2, APP, ERI3/PRNPIP and SYN1. Mislocalized cytosolically exposed PrP interacts with MGRN1; this interaction alters MGRN1 subcellular location and causes lysosomal enlargement. Interacts with KIAA1191.

It localises to the cell membrane. The protein localises to the golgi apparatus. Functionally, its primary physiological function is unclear. Has cytoprotective activity against internal or environmental stresses. May play a role in neuronal development and synaptic plasticity. May be required for neuronal myelin sheath maintenance. May play a role in iron uptake and iron homeostasis. Soluble oligomers are toxic to cultured neuroblastoma cells and induce apoptosis (in vitro). Association with GPC1 (via its heparan sulfate chains) targets PRNP to lipid rafts. Also provides Cu(2+) or Zn(2+) for the ascorbate-mediated GPC1 deaminase degradation of its heparan sulfate side chains. The sequence is that of Major prion protein (PRNP) from Macaca fascicularis (Crab-eating macaque).